A 268-amino-acid chain; its full sequence is uncharacterized protein (268 aa).

Residues 132–159 (DELDEKIIEFDTKMNEILEELLEDVEVE) are a coiled coil.

This is an uncharacterized protein from Methanocaldococcus jannaschii (strain ATCC 43067 / DSM 2661 / JAL-1 / JCM 10045 / NBRC 100440) (Methanococcus jannaschii).